A 422-amino-acid polypeptide reads, in one-letter code: Histidinol dehydrogenase (422 aa).

Residues Tyr123, Gln183, and Asn206 each coordinate NAD(+). Substrate is bound by residues Ser229, Gln251, and His254. 2 residues coordinate Zn(2+): Gln251 and His254. Catalysis depends on proton acceptor residues Glu320 and His321. Substrate-binding residues include His321, Asp354, Glu408, and His413. Asp354 contacts Zn(2+). Residue His413 coordinates Zn(2+).

This sequence belongs to the histidinol dehydrogenase family. Requires Zn(2+) as cofactor.

It carries out the reaction L-histidinol + 2 NAD(+) + H2O = L-histidine + 2 NADH + 3 H(+). It functions in the pathway amino-acid biosynthesis; L-histidine biosynthesis; L-histidine from 5-phospho-alpha-D-ribose 1-diphosphate: step 9/9. Functionally, catalyzes the sequential NAD-dependent oxidations of L-histidinol to L-histidinaldehyde and then to L-histidine. This Natronomonas pharaonis (strain ATCC 35678 / DSM 2160 / CIP 103997 / JCM 8858 / NBRC 14720 / NCIMB 2260 / Gabara) (Halobacterium pharaonis) protein is Histidinol dehydrogenase.